Reading from the N-terminus, the 184-residue chain is Ribosome-recycling factor (184 aa).

The protein belongs to the RRF family.

It localises to the cytoplasm. In terms of biological role, responsible for the release of ribosomes from messenger RNA at the termination of protein biosynthesis. May increase the efficiency of translation by recycling ribosomes from one round of translation to another. The polypeptide is Ribosome-recycling factor (Borrelia hermsii (strain HS1 / DAH)).